Consider the following 312-residue polypeptide: MALRIGVLCGGRSAEREVSLRSGEAVYQALMAAGYNDVVKIDVGYDLVEQLKGNEIQVAFLALHGKYGEDGTIQGLLEMLDIPYTGSGVLASALAINKIATKKIFKMEGIPTPAFSVITKKEVEDKSLQEAALRAIKEVGVPAVVKANTQGSTIGITFVHVKEKMAEAIESALKYDQDVLVEQFVAGTEVTASVLGNNSPEALPLIEITSVTGVYDYQSKYTPGMSDHIIPPRLPQDIQEKIKELAIKSFLSLGCRGLGRIDFIIRDNQPYALEVNTLPGMTATSLFPDAANYAGISFPELTDRLIKLALEQ.

Positions 102 to 307 (KKIFKMEGIP…FPELTDRLIK (206 aa)) constitute an ATP-grasp domain. An ATP-binding site is contributed by 136 to 191 (IKEVGVPAVVKANTQGSTIGITFVHVKEKMAEAIESALKYDQDVLVEQFVAGTEVT). Residues Asp-262, Glu-274, and Asn-276 each coordinate Mg(2+).

The protein belongs to the D-alanine--D-alanine ligase family. Mg(2+) serves as cofactor. The cofactor is Mn(2+).

The protein resides in the cytoplasm. It carries out the reaction 2 D-alanine + ATP = D-alanyl-D-alanine + ADP + phosphate + H(+). Its pathway is cell wall biogenesis; peptidoglycan biosynthesis. Cell wall formation. The sequence is that of D-alanine--D-alanine ligase from Desulforamulus reducens (strain ATCC BAA-1160 / DSM 100696 / MI-1) (Desulfotomaculum reducens).